The following is a 111-amino-acid chain: Putative carnobacteriocin-B2 immunity protein (111 aa).

In terms of biological role, could impart immunity to carnobacteriocin-B2 to naturally sensitive host strains. This is Putative carnobacteriocin-B2 immunity protein from Carnobacterium maltaromaticum (Carnobacterium piscicola).